The following is a 490-amino-acid chain: 2,3-bisphosphoglycerate-independent phosphoglycerate mutase (490 aa).

2 residues coordinate Mn(2+): Asp9 and Ser59. Ser59 acts as the Phosphoserine intermediate in catalysis. Substrate-binding positions include His116, 145–146 (RD), Arg175, Arg181, 246–249 (RSDR), and Lys319. 5 residues coordinate Mn(2+): Asp385, His389, Asp426, His427, and His444.

This sequence belongs to the BPG-independent phosphoglycerate mutase family. As to quaternary structure, monomer. The cofactor is Mn(2+).

The catalysed reaction is (2R)-2-phosphoglycerate = (2R)-3-phosphoglycerate. Its pathway is carbohydrate degradation; glycolysis; pyruvate from D-glyceraldehyde 3-phosphate: step 3/5. Catalyzes the interconversion of 2-phosphoglycerate and 3-phosphoglycerate. The polypeptide is 2,3-bisphosphoglycerate-independent phosphoglycerate mutase (Helicobacter hepaticus (strain ATCC 51449 / 3B1)).